Here is a 309-residue protein sequence, read N- to C-terminus: Coenzyme PQQ synthesis protein B (309 aa).

The protein belongs to the PqqB family.

It participates in cofactor biosynthesis; pyrroloquinoline quinone biosynthesis. May be involved in the transport of PQQ or its precursor to the periplasm. The chain is Coenzyme PQQ synthesis protein B from Bradyrhizobium diazoefficiens (strain JCM 10833 / BCRC 13528 / IAM 13628 / NBRC 14792 / USDA 110).